A 307-amino-acid chain; its full sequence is Methionyl-tRNA formyltransferase (307 aa).

108 to 111 (SLLP) is a (6S)-5,6,7,8-tetrahydrofolate binding site.

Belongs to the Fmt family.

It catalyses the reaction L-methionyl-tRNA(fMet) + (6R)-10-formyltetrahydrofolate = N-formyl-L-methionyl-tRNA(fMet) + (6S)-5,6,7,8-tetrahydrofolate + H(+). Attaches a formyl group to the free amino group of methionyl-tRNA(fMet). The formyl group appears to play a dual role in the initiator identity of N-formylmethionyl-tRNA by promoting its recognition by IF2 and preventing the misappropriation of this tRNA by the elongation apparatus. This Xanthomonas campestris pv. campestris (strain 8004) protein is Methionyl-tRNA formyltransferase.